Consider the following 433-residue polypeptide: Serine hydroxymethyltransferase (433 aa).

Residues Leu132 and 136 to 138 (GHL) contribute to the (6S)-5,6,7,8-tetrahydrofolate site. Lys241 carries the N6-(pyridoxal phosphate)lysine modification.

It belongs to the SHMT family. In terms of assembly, homodimer. Requires pyridoxal 5'-phosphate as cofactor.

Its subcellular location is the cytoplasm. It catalyses the reaction (6R)-5,10-methylene-5,6,7,8-tetrahydrofolate + glycine + H2O = (6S)-5,6,7,8-tetrahydrofolate + L-serine. It functions in the pathway one-carbon metabolism; tetrahydrofolate interconversion. The protein operates within amino-acid biosynthesis; glycine biosynthesis; glycine from L-serine: step 1/1. Functionally, catalyzes the reversible interconversion of serine and glycine with tetrahydrofolate (THF) serving as the one-carbon carrier. This reaction serves as the major source of one-carbon groups required for the biosynthesis of purines, thymidylate, methionine, and other important biomolecules. Also exhibits THF-independent aldolase activity toward beta-hydroxyamino acids, producing glycine and aldehydes, via a retro-aldol mechanism. This Bradyrhizobium sp. (strain ORS 278) protein is Serine hydroxymethyltransferase.